The following is a 546-amino-acid chain: Glucose-6-phosphate isomerase 1 (546 aa).

Glu-353 serves as the catalytic Proton donor. Catalysis depends on residues His-384 and Lys-512.

It belongs to the GPI family.

It localises to the cytoplasm. It carries out the reaction alpha-D-glucose 6-phosphate = beta-D-fructose 6-phosphate. Its pathway is carbohydrate biosynthesis; gluconeogenesis. It functions in the pathway carbohydrate degradation; glycolysis; D-glyceraldehyde 3-phosphate and glycerone phosphate from D-glucose: step 2/4. Functionally, catalyzes the reversible isomerization of glucose-6-phosphate to fructose-6-phosphate. In Colwellia psychrerythraea (strain 34H / ATCC BAA-681) (Vibrio psychroerythus), this protein is Glucose-6-phosphate isomerase 1.